Here is a 425-residue protein sequence, read N- to C-terminus: RNA polymerase sigma factor SigA (425 aa).

The segment at 193-263 is sigma-70 factor domain-2; sequence MVQSNLRLVV…TRAIADQSRT (71 aa). The Interaction with polymerase core subunit RpoC signature appears at 217 to 220; the sequence is DLIQ. Residues 272-347 form a sigma-70 factor domain-3 region; the sequence is ETISRIKKTT…EADGETPEDE (76 aa). Residues 360–413 form a sigma-70 factor domain-4 region; the sequence is VLDTLSPRERDVLRLRYGLDDGRMKTLEEIGQIFNVTRERIRQIEAKALRKLRH. Residues 386–405 constitute a DNA-binding region (H-T-H motif); sequence LEEIGQIFNVTRERIRQIEA.

The protein belongs to the sigma-70 factor family. RpoD/SigA subfamily. In terms of assembly, interacts transiently with the RNA polymerase catalytic core.

The protein resides in the cytoplasm. Its function is as follows. Sigma factors are initiation factors that promote the attachment of RNA polymerase to specific initiation sites and are then released. This sigma factor is the primary sigma factor during exponential growth. The polypeptide is RNA polymerase sigma factor SigA (Synechocystis sp. (strain ATCC 27184 / PCC 6803 / Kazusa)).